Here is a 460-residue protein sequence, read N- to C-terminus: Serine hydroxymethyltransferase, cytosolic (460 aa).

Position 244 is an N6-(pyridoxal phosphate)lysine (Lys244).

The protein belongs to the SHMT family. In terms of assembly, homotetramer. It depends on pyridoxal 5'-phosphate as a cofactor.

It localises to the cytoplasm. It catalyses the reaction (6R)-5,10-methylene-5,6,7,8-tetrahydrofolate + glycine + H2O = (6S)-5,6,7,8-tetrahydrofolate + L-serine. Its pathway is one-carbon metabolism; tetrahydrofolate interconversion. Its function is as follows. Interconversion of serine and glycine. This is Serine hydroxymethyltransferase, cytosolic (SHMT-1) from Encephalitozoon cuniculi (strain GB-M1) (Microsporidian parasite).